The chain runs to 218 residues: DNA-binding protein HU 2 (218 aa).

Residues 1 to 91 form a bacterial histone-like domain region; the sequence is MNKAQLVEAI…QGFKDLVSGS (91 aa). A disordered region spans residues 101 to 218; sequence VKKAPKGSLS…TAKKATARKK (118 aa). Residues 118–218 are degenerate repeats region; sequence KAAGKKAAAK…TAKKATARKK (101 aa). Residues 127 to 161 are compositionally biased toward low complexity; sequence KKATGAAKKTTGAAKKTSAAAKKTTAKKTTGAAKT. Over residues 162–172 the composition is skewed to basic residues; the sequence is TAKKTTAKKSA. The segment covering 173–182 has biased composition (low complexity); the sequence is AKTTTAAAKK. The segment covering 183-218 has biased composition (basic residues); it reads TAAKKAPAKKATAKKAPAKKSTARKTTAKKATARKK.

The protein belongs to the bacterial histone-like protein family. Long actinobacterial subfamily. In terms of assembly, homodimer.

It is found in the cytoplasm. Its subcellular location is the nucleoid. In terms of biological role, histone-like DNA-binding protein which is capable of wrapping DNA to stabilize it, and thus to prevent its denaturation under extreme environmental conditions. The protein is DNA-binding protein HU 2 (hup2) of Streptomyces coelicolor (strain ATCC BAA-471 / A3(2) / M145).